The chain runs to 1053 residues: Polyphosphate kinase (1053 aa).

Disordered stretches follow at residues 23–155 (LKIN…QLME), 200–245 (VQNP…TKSK), and 302–328 (NNNNNDFKSSTMIGKPFSSGGDGSTSP). A compositionally biased stretch (low complexity) spans 32-50 (STTTTTSTTTTTTTTTSTS). Over residues 81-102 (VDFEDDYDEESSSFDEEDEDSA) the composition is skewed to acidic residues. Positions 143 to 155 (TTANPVQNCQLME) are enriched in polar residues. Residues 215–239 (SSGSSSSSSSNNNNSNSNSNGNCNS) are compositionally biased toward low complexity. Residue histidine 800 is the Phosphohistidine intermediate of the active site. The interval 1027-1053 (RSSPIDEDSQTQFMNQTNQKHPVIWSK) is disordered. A compositionally biased stretch (polar residues) spans 1036–1046 (QTQFMNQTNQK).

The protein belongs to the polyphosphate kinase 1 (PPK1) family. In terms of assembly, hexamer. May form higher oligomeric structures in the presence of ATP.

The protein localises to the vesicle. It carries out the reaction [phosphate](n) + ATP = [phosphate](n+1) + ADP. Functionally, catalyzes the reversible transfer of the terminal phosphate of ATP to form a long-chain polyphosphate (polyP). Produces polyP in a broad range of chain lengths (50-300 Pi residues). Involved in development (growth and fruiting body formation), sporulation, phagocytosis, cell division and the late stages of cytokinesis. The chain is Polyphosphate kinase (ppkA) from Dictyostelium discoideum (Social amoeba).